A 399-amino-acid chain; its full sequence is Acetate kinase (399 aa).

Mg(2+) is bound at residue Asn-10. Lys-17 provides a ligand contact to ATP. Arg-91 provides a ligand contact to substrate. The Proton donor/acceptor role is filled by Asp-148. Residues 208–212, 283–285, and 331–335 each bind ATP; these read HLGNG, DCR, and GIGEN. Glu-385 serves as a coordination point for Mg(2+).

Belongs to the acetokinase family. As to quaternary structure, homodimer. It depends on Mg(2+) as a cofactor. Mn(2+) is required as a cofactor.

The protein localises to the cytoplasm. It catalyses the reaction acetate + ATP = acetyl phosphate + ADP. The protein operates within metabolic intermediate biosynthesis; acetyl-CoA biosynthesis; acetyl-CoA from acetate: step 1/2. Catalyzes the formation of acetyl phosphate from acetate and ATP. Can also catalyze the reverse reaction. The sequence is that of Acetate kinase from Shewanella sp. (strain MR-4).